A 322-amino-acid chain; its full sequence is NADH-cytochrome b5 reductase 2 (322 aa).

Residues 31–48 (LAPIYAAVGITGVGVGLY) traverse the membrane as a helical segment. In terms of domain architecture, FAD-binding FR-type spans 72-176 (QGWFDLKLSE…KGPIVKYPWE (105 aa)). 179–214 (KHNHICLIAGGTGITPMYQLAREIFKNPEDQTKVTL) provides a ligand contact to FAD.

Belongs to the flavoprotein pyridine nucleotide cytochrome reductase family. Requires FAD as cofactor.

The protein localises to the mitochondrion outer membrane. The enzyme catalyses 2 Fe(III)-[cytochrome b5] + NADH = 2 Fe(II)-[cytochrome b5] + NAD(+) + H(+). May mediate the reduction of outer membrane cytochrome b5. This is NADH-cytochrome b5 reductase 2 (mcr1) from Aspergillus niger (strain ATCC MYA-4892 / CBS 513.88 / FGSC A1513).